A 448-amino-acid chain; its full sequence is Probable glycine dehydrogenase (decarboxylating) subunit 1 (448 aa).

Belongs to the GcvP family. N-terminal subunit subfamily. In terms of assembly, the glycine cleavage system is composed of four proteins: P, T, L and H. In this organism, the P 'protein' is a heterodimer of two subunits.

The enzyme catalyses N(6)-[(R)-lipoyl]-L-lysyl-[glycine-cleavage complex H protein] + glycine + H(+) = N(6)-[(R)-S(8)-aminomethyldihydrolipoyl]-L-lysyl-[glycine-cleavage complex H protein] + CO2. The glycine cleavage system catalyzes the degradation of glycine. The P protein binds the alpha-amino group of glycine through its pyridoxal phosphate cofactor; CO(2) is released and the remaining methylamine moiety is then transferred to the lipoamide cofactor of the H protein. The protein is Probable glycine dehydrogenase (decarboxylating) subunit 1 of Listeria monocytogenes serotype 4b (strain CLIP80459).